Here is a 263-residue protein sequence, read N- to C-terminus: Acyl-[acyl-carrier-protein]--UDP-N-acetylglucosamine O-acyltransferase (263 aa).

It belongs to the transferase hexapeptide repeat family. LpxA subfamily. Homotrimer.

It localises to the cytoplasm. It carries out the reaction a (3R)-hydroxyacyl-[ACP] + UDP-N-acetyl-alpha-D-glucosamine = a UDP-3-O-[(3R)-3-hydroxyacyl]-N-acetyl-alpha-D-glucosamine + holo-[ACP]. It functions in the pathway glycolipid biosynthesis; lipid IV(A) biosynthesis; lipid IV(A) from (3R)-3-hydroxytetradecanoyl-[acyl-carrier-protein] and UDP-N-acetyl-alpha-D-glucosamine: step 1/6. Functionally, involved in the biosynthesis of lipid A, a phosphorylated glycolipid that anchors the lipopolysaccharide to the outer membrane of the cell. The chain is Acyl-[acyl-carrier-protein]--UDP-N-acetylglucosamine O-acyltransferase from Xanthomonas oryzae pv. oryzae (strain PXO99A).